The chain runs to 38 residues: Photosystem I reaction center subunit VIII (38 aa).

A helical membrane pass occupies residues 12–32; it reads WILIPIIGWLMPAVVMGLLFL.

Belongs to the PsaI family.

It localises to the cellular thylakoid membrane. May help in the organization of the PsaL subunit. The protein is Photosystem I reaction center subunit VIII of Gloeothece citriformis (strain PCC 7424) (Cyanothece sp. (strain PCC 7424)).